We begin with the raw amino-acid sequence, 162 residues long: Large ribosomal subunit protein bL17 (162 aa).

Residues 118 to 162 (RAPAAAPEAEEKGEKKAAGKAEKAPKAAKAPKAEKKPAKKAAKAE) form a disordered region. Positions 126-162 (AEEKGEKKAAGKAEKAPKAAKAPKAEKKPAKKAAKAE) are enriched in basic and acidic residues.

It belongs to the bacterial ribosomal protein bL17 family. In terms of assembly, part of the 50S ribosomal subunit. Contacts protein L32.

This Anaeromyxobacter dehalogenans (strain 2CP-C) protein is Large ribosomal subunit protein bL17.